The following is a 162-amino-acid chain: RxLR effector protein PITG_06094 (162 aa).

Residues 1 to 20 form the signal peptide; it reads MRLSFILAATLTGLLACATA. The short motif at 51 to 91 is the RxLR-dEER element; it reads RFLRAYNDAEDDSEDPKNVKNTVDAKPADESEDSELSEEER. The interval 56-88 is disordered; sequence YNDAEDDSEDPKNVKNTVDAKPADESEDSELSE.

Belongs to the RxLR effector family.

The protein localises to the secreted. It localises to the host cytoplasm. Its subcellular location is the host nucleus. The protein resides in the host nucleolus. In terms of biological role, effector that enhances P.infestans colonization of Nicotiana benthamiana leaves. The sequence is that of RxLR effector protein PITG_06094 from Phytophthora infestans (strain T30-4) (Potato late blight agent).